The chain runs to 371 residues: DNA primase DnaG (371 aa).

The Toprim domain maps to 173 to 248 (DEIILVEGRA…DIDYVAVAPP (76 aa)). Mg(2+) contacts are provided by glutamate 179, aspartate 221, and aspartate 223.

The protein belongs to the archaeal DnaG primase family. Forms a ternary complex with MCM helicase and DNA. Component of the archaeal exosome complex. Mg(2+) serves as cofactor.

It catalyses the reaction ssDNA + n NTP = ssDNA/pppN(pN)n-1 hybrid + (n-1) diphosphate.. RNA polymerase that catalyzes the synthesis of short RNA molecules used as primers for DNA polymerase during DNA replication. Also part of the exosome, which is a complex involved in RNA degradation. Acts as a poly(A)-binding protein that enhances the interaction between heteromeric, adenine-rich transcripts and the exosome. This is DNA primase DnaG from Nanoarchaeum equitans (strain Kin4-M).